The primary structure comprises 327 residues: Methionyl-tRNA formyltransferase (327 aa).

121–124 serves as a coordination point for (6S)-5,6,7,8-tetrahydrofolate; sequence SLLP.

It belongs to the Fmt family.

The enzyme catalyses L-methionyl-tRNA(fMet) + (6R)-10-formyltetrahydrofolate = N-formyl-L-methionyl-tRNA(fMet) + (6S)-5,6,7,8-tetrahydrofolate + H(+). In terms of biological role, attaches a formyl group to the free amino group of methionyl-tRNA(fMet). The formyl group appears to play a dual role in the initiator identity of N-formylmethionyl-tRNA by promoting its recognition by IF2 and preventing the misappropriation of this tRNA by the elongation apparatus. The polypeptide is Methionyl-tRNA formyltransferase (Burkholderia mallei (strain ATCC 23344)).